The sequence spans 1153 residues: Otoancorin (1153 aa).

Positions 1–22 (MSQEPTTYSLFLFLFLSHGVSS) are cleaved as a signal peptide. N-linked (GlcNAc...) asparagine glycosylation occurs at Asn156. Asn211 carries N-linked (GlcNAc...) (complex) asparagine glycosylation. Residues Asn244, Asn289, Asn321, Asn394, Asn398, Asn460, Asn544, Asn812, Asn911, and Asn974 are each glycosylated (N-linked (GlcNAc...) asparagine). Residues 1109–1128 (HSWQDAPASAGPTRTSSSRS) form a disordered region. The GPI-anchor amidated alanine moiety is linked to residue Ala1130. Residues 1131 to 1153 (GALQSWGLWLGCPLLVLMAKLLW) constitute a propeptide, removed in mature form.

The protein belongs to the stereocilin family.

Its subcellular location is the apical cell membrane. It localises to the secreted. The protein localises to the extracellular space. It is found in the extracellular matrix. In terms of biological role, may act as an adhesion molecule. This Homo sapiens (Human) protein is Otoancorin (OTOA).